The following is a 109-amino-acid chain: MKNYNFILISLFIIFFIILNISSNNNNFTNAEEMTGINDIINRRYQEYMENRTPNEQQQQQQQQQNNNNPPQHIDPLVGNPCNHDQIMQGRISKLKEKLKKDQQNQQQN.

Positions 1 to 23 (MKNYNFILISLFIIFFIILNISS) are cleaved as a signal peptide. N-linked (GlcNAc...) asparagine glycosylation occurs at asparagine 27. A disordered region spans residues 45-109 (YQEYMENRTP…KKDQQNQQQN (65 aa)). Low complexity predominate over residues 54–72 (PNEQQQQQQQQQNNNNPPQ). Residues 94-103 (KLKEKLKKDQ) are compositionally biased toward basic and acidic residues.

It is found in the secreted. This is an uncharacterized protein from Dictyostelium discoideum (Social amoeba).